The sequence spans 300 residues: Epimerase family protein SAB0724c (300 aa).

It belongs to the NAD(P)-dependent epimerase/dehydratase family. SDR39U1 subfamily.

The protein is Epimerase family protein SAB0724c of Staphylococcus aureus (strain bovine RF122 / ET3-1).